The primary structure comprises 69 residues: Disintegrin VLO5B (69 aa).

The Disintegrin domain maps to 1–66 (MNSANPCCDP…DCPRNPWKSE (66 aa)). 4 disulfides stabilise this stretch: C7–C30, C21–C27, C26–C51, and C39–C58. The short motif at 43 to 45 (MLD) is the Cell attachment site; atypical (MLD) element.

Belongs to the disintegrin family. Dimeric disintegrin subfamily. In terms of assembly, heterodimer with VLO5A; disulfide-linked. In terms of tissue distribution, expressed by the venom gland.

It localises to the secreted. Functionally, poor inhibitor of platelet aggregation. The disintegrin inhibits the adhesion of the alpha-4/beta-1 (ITGA4/ITGB1) integrin to VCAM-1. Inhibition on alpha-2b/beta-3 (ITGA2B/ITGB3) is low. This is Disintegrin VLO5B from Macrovipera lebetina obtusa (Levant blunt-nosed viper).